Reading from the N-terminus, the 311-residue chain is Coproporphyrin III ferrochelatase 1 (311 aa).

Fe-coproporphyrin III is bound by residues tyrosine 12, arginine 29, 45-46 (RY), serine 53, and tyrosine 124. Fe(2+)-binding residues include histidine 182 and glutamate 263.

The protein belongs to the ferrochelatase family.

It is found in the cytoplasm. The enzyme catalyses Fe-coproporphyrin III + 2 H(+) = coproporphyrin III + Fe(2+). It functions in the pathway porphyrin-containing compound metabolism; protoheme biosynthesis. Its function is as follows. Involved in coproporphyrin-dependent heme b biosynthesis. Catalyzes the insertion of ferrous iron into coproporphyrin III to form Fe-coproporphyrin III. This chain is Coproporphyrin III ferrochelatase 1, found in Bacillus thuringiensis subsp. konkukian (strain 97-27).